Consider the following 294-residue polypeptide: NADH-cytochrome b5 reductase 1 (294 aa).

The helical transmembrane segment at 18 to 38 threads the bilayer; the sequence is PFIVFATVATIISAFIGYYFL. The 104-residue stretch at 51 to 154 folds into the FAD-binding FR-type domain; it reads DEFQKFPLIE…RGPKGFFTYT (104 aa). FAD-binding positions include 134–149 and 160–192; these read AGKNVGEHIEIRGPKG and SFGMIAGGTGIAPMYQIITAILKNPEDKTKIHL.

The protein belongs to the flavoprotein pyridine nucleotide cytochrome reductase family. As to quaternary structure, monomer. Component of the 2-(3-amino-3-carboxypropyl)histidine synthase complex composed of DPH1, DPH2, DPH3 and a NADH-dependent reductase, predominantly CBR1. It depends on FAD as a cofactor.

It localises to the mitochondrion outer membrane. It carries out the reaction 2 Fe(III)-[cytochrome b5] + NADH = 2 Fe(II)-[cytochrome b5] + NAD(+) + H(+). The enzyme catalyses 2 Fe(3+)-[Dph3] + NADH = 2 Fe(2+)-[Dph3] + NAD(+) + H(+). Its pathway is protein modification; peptidyl-diphthamide biosynthesis. Functionally, NADH-dependent reductase for DPH3 and cytochrome b5. Required for the first step of diphthamide biosynthesis, a post-translational modification of histidine which occurs in elongation factor 2. DPH1 and DPH2 transfer a 3-amino-3-carboxypropyl (ACP) group from S-adenosyl-L-methionine (SAM) to a histidine residue, the reaction is assisted by a reduction system comprising DPH3 and a NADH-dependent reductase, predominantly CBR1. By reducing DPH3, also involved in the formation of the tRNA wobble base modification mcm5s 2U (5-methoxycarbonylmethyl-2-thiouridine), mediated by the elongator complex. The cytochrome b5/NADH cytochrome b5 reductase electron transfer system supports the catalytic activity of several sterol biosynthetic enzymes. The polypeptide is NADH-cytochrome b5 reductase 1 (CBR1) (Candida albicans (strain SC5314 / ATCC MYA-2876) (Yeast)).